The following is a 460-amino-acid chain: Indoleacetamide hydrolase (460 aa).

Catalysis depends on charge relay system residues K71 and S146. S169 functions as the Acyl-ester intermediate in the catalytic mechanism.

The protein belongs to the amidase family.

The protein operates within plant hormone metabolism; auxin biosynthesis. Functionally, hydrolyzes indole-3-acetamide (IAM) into indole-3-acetic acid (IAA). This chain is Indoleacetamide hydrolase (iaaH), found in Pantoea agglomerans pv. gypsophilae (Erwinia herbicola).